Consider the following 202-residue polypeptide: Nigerythrin (202 aa).

The Ferritin-like diiron domain occupies Lys23–Asp168. Residues Glu40, Glu73, Glu115, Glu118, Glu149, His152, Cys174, Cys177, Cys189, and Cys192 each contribute to the Fe cation site. The Rubredoxin-like domain occupies Asp169–Tyr202.

As to quaternary structure, homodimer. May possess two rubredoxin-like centers and two hemerythrin-like binuclear-iron centers per dimer.

The protein resides in the cytoplasm. Its function is as follows. Exhibits NADH peroxidase activity (in vitro). This chain is Nigerythrin (ngr), found in Nitratidesulfovibrio vulgaris (strain ATCC 29579 / DSM 644 / CCUG 34227 / NCIMB 8303 / VKM B-1760 / Hildenborough) (Desulfovibrio vulgaris).